Here is a 373-residue protein sequence, read N- to C-terminus: Lipoyl synthase (373 aa).

The segment at 12 to 36 (HVVSNDHPSSSPLQPGVKQSGEDKI) is disordered. 7 residues coordinate [4Fe-4S] cluster: cysteine 81, cysteine 86, cysteine 92, cysteine 107, cysteine 111, cysteine 114, and serine 323. Positions 93-312 (FSHGTATFMI…EEYGMALGFS (220 aa)) constitute a Radical SAM core domain. The segment at 346 to 373 (PAVSSTEHRERHTIASKSASKTESIPHR) is disordered. Over residues 360 to 373 (ASKSASKTESIPHR) the composition is skewed to polar residues.

The protein belongs to the radical SAM superfamily. Lipoyl synthase family. [4Fe-4S] cluster serves as cofactor.

It is found in the cytoplasm. It catalyses the reaction [[Fe-S] cluster scaffold protein carrying a second [4Fe-4S](2+) cluster] + N(6)-octanoyl-L-lysyl-[protein] + 2 oxidized [2Fe-2S]-[ferredoxin] + 2 S-adenosyl-L-methionine + 4 H(+) = [[Fe-S] cluster scaffold protein] + N(6)-[(R)-dihydrolipoyl]-L-lysyl-[protein] + 4 Fe(3+) + 2 hydrogen sulfide + 2 5'-deoxyadenosine + 2 L-methionine + 2 reduced [2Fe-2S]-[ferredoxin]. It participates in protein modification; protein lipoylation via endogenous pathway; protein N(6)-(lipoyl)lysine from octanoyl-[acyl-carrier-protein]: step 2/2. Its function is as follows. Catalyzes the radical-mediated insertion of two sulfur atoms into the C-6 and C-8 positions of the octanoyl moiety bound to the lipoyl domains of lipoate-dependent enzymes, thereby converting the octanoylated domains into lipoylated derivatives. The chain is Lipoyl synthase from Xylella fastidiosa (strain M12).